Reading from the N-terminus, the 234-residue chain is MAKKVFKRLEKLFSKIQNDKVYGVEQGVGAVKSLASAKFDETVEVALRLGVDPRHADQMVRGAVVLPHGTGKKVRVAVFAKDIKQDEAKNAGADVVGGDDLAEEIKNGRIDFDMVIATPDMMAVVGKVGRILGPKGLMPNPKTGTVTMDIAKAVTNAKSGQVNFKVDKKGNIHAPIGKVSFPEEKIKENMLELVKTINRLKPNSAKGKYIRNAALSLTMSPSVSLDAQELMDIK.

It belongs to the universal ribosomal protein uL1 family. In terms of assembly, part of the 50S ribosomal subunit.

Binds directly to 23S rRNA. The L1 stalk is quite mobile in the ribosome, and is involved in E site tRNA release. Functionally, protein L1 is also a translational repressor protein, it controls the translation of the L11 operon by binding to its mRNA. The polypeptide is Large ribosomal subunit protein uL1 (Helicobacter acinonychis (strain Sheeba)).